A 223-amino-acid polypeptide reads, in one-letter code: Cutinase (223 aa).

An N-terminal signal peptide occupies residues 1–19 (MKFFAFSMLIGEASPIVLA). Residues Cys46 and Cys124 are joined by a disulfide bond. Ser135 functions as the Nucleophile in the catalytic mechanism. A disulfide bridge connects residues Cys185 and Cys192. The active site involves Asp189. His202 acts as the Proton donor/acceptor in catalysis.

Belongs to the cutinase family. In terms of processing, the 2 disulfide bonds play a critical role in holding the catalytic residues in juxta-position; reduction of the disulfide bridges results in the complete inactivation of the enzyme.

Its subcellular location is the secreted. It catalyses the reaction cutin + H2O = cutin monomers.. In terms of biological role, catalyzes the hydrolysis of complex carboxylic polyesters found in the cell wall of plants. Degrades cutin, a macromolecule that forms the structure of the plant cuticle. Allows pathogenic fungi to penetrate through the cuticular barrier into the host plant during the initial stage of fungal infection. The chain is Cutinase (CUT) from Didymella rabiei (Chickpea ascochyta blight fungus).